A 637-amino-acid polypeptide reads, in one-letter code: Protein kinase domain-containing protein ppk3 (637 aa).

Residues 1–296 form the Protein kinase domain; that stretch reads MDFIKSAASF…QLLSSKLEVI (296 aa). One copy of the HEAT repeat lies at 414–450; the sequence is KTLNNELLRSLAVVQNDQHPTLRTNSTICLGKIAEYL. Positions 576 to 586 are enriched in basic and acidic residues; that stretch reads NDTTEIKEKKN. Residues 576-637 form a disordered region; the sequence is NDTTEIKEKK…ENNVEESWGL (62 aa). Residues 608–631 show a composition bias toward acidic residues; the sequence is ETEEQIDESWMENWNDEEETENNV.

The protein localises to the golgi apparatus. This is Protein kinase domain-containing protein ppk3 (ppk3) from Schizosaccharomyces pombe (strain 972 / ATCC 24843) (Fission yeast).